We begin with the raw amino-acid sequence, 871 residues long: Leucine--tRNA ligase (871 aa).

The 'HIGH' region signature appears at 42–52 (PYPSGSLHMGH). The 'KMSKS' region signature appears at 634-638 (TMSKS). An ATP-binding site is contributed by K637.

This sequence belongs to the class-I aminoacyl-tRNA synthetase family.

Its subcellular location is the cytoplasm. It carries out the reaction tRNA(Leu) + L-leucine + ATP = L-leucyl-tRNA(Leu) + AMP + diphosphate. The chain is Leucine--tRNA ligase from Nostoc punctiforme (strain ATCC 29133 / PCC 73102).